We begin with the raw amino-acid sequence, 331 residues long: Heme A synthase (331 aa).

8 helical membrane passes run 6 to 26 (VAIW…IGGF), 87 to 107 (YVHR…FIYF), 124 to 144 (ALLF…SGLV), 154 to 174 (LALH…QFFD), 193 to 213 (IWII…VAGL), 251 to 271 (VQFI…ILTI), 279 to 299 (LYVM…TLLL), and 301 to 321 (IPMA…GSGL). Residue histidine 255 coordinates heme. Histidine 309 provides a ligand contact to heme.

This sequence belongs to the COX15/CtaA family. Type 2 subfamily. As to quaternary structure, interacts with CtaB. It depends on heme b as a cofactor.

Its subcellular location is the cell membrane. The catalysed reaction is Fe(II)-heme o + 2 A + H2O = Fe(II)-heme a + 2 AH2. It participates in porphyrin-containing compound metabolism; heme A biosynthesis; heme A from heme O: step 1/1. Its function is as follows. Catalyzes the conversion of heme O to heme A by two successive hydroxylations of the methyl group at C8. The first hydroxylation forms heme I, the second hydroxylation results in an unstable dihydroxymethyl group, which spontaneously dehydrates, resulting in the formyl group of heme A. In Wolbachia pipientis subsp. Culex pipiens (strain wPip), this protein is Heme A synthase.